A 207-amino-acid chain; its full sequence is rRNA N(6)-adenosine-methyltransferase METTL5 (207 aa).

S-adenosyl-L-methionine contacts are provided by residues Q25, T28, G56, C59, V61, D78, and 105-106 (DV).

Belongs to the methyltransferase superfamily. PrmA family.

It localises to the nucleus. It is found in the presynapse. Its subcellular location is the postsynapse. It catalyses the reaction adenosine(1832) in 18S rRNA + S-adenosyl-L-methionine = N(6)-methyladenosine(1832) in 18S rRNA + S-adenosyl-L-homocysteine + H(+). RRNA N6-adenosine-methyltransferase activity is inhibited by zinc. Its function is as follows. Catalytic subunit of a heterodimer with TRMT112, which specifically methylates the 6th position of adenine in position 1832 of 18S rRNA. N6-methylation of adenine(1832) in 18S rRNA resides in the decoding center of 18S rRNA and is required for translation and embryonic stem cells (ESCs) pluripotency and differentiation. The protein is rRNA N(6)-adenosine-methyltransferase METTL5 of Danio rerio (Zebrafish).